Here is a 311-residue protein sequence, read N- to C-terminus: tRNA-cytidine(32) 2-sulfurtransferase (311 aa).

The PP-loop motif motif lies at 47-52 (SGGKDS). Residues C122, C125, and C213 each contribute to the [4Fe-4S] cluster site.

Belongs to the TtcA family. Homodimer. Mg(2+) serves as cofactor. [4Fe-4S] cluster is required as a cofactor.

It localises to the cytoplasm. It catalyses the reaction cytidine(32) in tRNA + S-sulfanyl-L-cysteinyl-[cysteine desulfurase] + AH2 + ATP = 2-thiocytidine(32) in tRNA + L-cysteinyl-[cysteine desulfurase] + A + AMP + diphosphate + H(+). Its pathway is tRNA modification. Catalyzes the ATP-dependent 2-thiolation of cytidine in position 32 of tRNA, to form 2-thiocytidine (s(2)C32). The sulfur atoms are provided by the cysteine/cysteine desulfurase (IscS) system. This is tRNA-cytidine(32) 2-sulfurtransferase from Salmonella choleraesuis (strain SC-B67).